The sequence spans 373 residues: Alpha-1,3-mannosyl-glycoprotein 4-beta-N-acetylglucosaminyltransferase-like protein MGAT4D (373 aa).

Residues 1 to 5 (MKAKN) lie on the Cytoplasmic side of the membrane. Residues 6-26 (VNLLFAFVAVLLFGFSCFCIS) form a helical; Signal-anchor for type II membrane protein membrane-spanning segment. At 27–373 (RMNQTNNQLI…REQHLKDNYY (347 aa)) the chain is on the lumenal side. N-linked (GlcNAc...) asparagine glycans are attached at residues N29, N54, and N144.

The protein belongs to the glycosyltransferase 54 family. In terms of assembly, isoform 2 self-associates; specifically in the endoplasmic reticulum prior to its translocation to the Golgi. Isoform 1 and isoform 2 interact with MGAT1, MGAT3 and MAN2A2; isoform 2 interacts specifically with MGAT1 in the Golgi. Post-translationally, isoform 2 is N-glycosylated; consisting of high-mannose and/or hybrid glycans. As to expression, isoform 1 and isoform 2 are specifically expressed in testis. Isoform 2 is expressed in spermatocytes but not in spermatids. Isoform 1 is expressed in spermatids.

The protein localises to the endoplasmic reticulum membrane. Its subcellular location is the endoplasmic reticulum-Golgi intermediate compartment membrane. It is found in the golgi apparatus membrane. Functionally, may play a role in male spermatogenesis. In vitro acts as inhibitor of MGAT1 activity causing cell surface proteins to carry mainly high mannose N-glycans. The function is mediated by its lumenal domain and occurs specifically in the Golgi. A catalytic glucosyltransferase activity is not detected. May be involved in regulation of Sertoli-germ cell interactions during specific stages of spermatogenesis. The sequence is that of Alpha-1,3-mannosyl-glycoprotein 4-beta-N-acetylglucosaminyltransferase-like protein MGAT4D from Mus musculus (Mouse).